A 291-amino-acid chain; its full sequence is MITTEKHAEVRELLDAERAAGRRVAMVGTSGGTHAGHISLVEQAKKECDVVAVFWNGALKLEWASGGVQAYNRDLAHDQALFEAAGVDIFYIPMRDDLYQRPSNTFMAMPGMLRHLTGMPEGEHMELLVTMVATLLNIAGPCLTFFGEKDWQQLVMFQRMAEDLHLPSRVIGCPTRREPDGVAISSRNTKLSPEQRAAAPALYAALTAAADAIAAGERDARAAAEVALARLRPVADPDYIVAVEAATLRPLDTLDPAAEGGPSDGEVRLLASVRFGTTPLVDNIGVTVPTA.

The active-site Proton donor is the His37. Gly147 to Asp150 is a binding site for ATP. A (R)-pantoate-binding site is contributed by Gln153. Residue Ile184–Arg187 participates in ATP binding.

Belongs to the pantothenate synthetase family. Homodimer.

It localises to the cytoplasm. It carries out the reaction (R)-pantoate + beta-alanine + ATP = (R)-pantothenate + AMP + diphosphate + H(+). It participates in cofactor biosynthesis; (R)-pantothenate biosynthesis; (R)-pantothenate from (R)-pantoate and beta-alanine: step 1/1. In terms of biological role, catalyzes the condensation of pantoate with beta-alanine in an ATP-dependent reaction via a pantoyl-adenylate intermediate. This Frankia alni (strain DSM 45986 / CECT 9034 / ACN14a) protein is Pantothenate synthetase 1.